The sequence spans 119 residues: Methylglyoxal synthase (119 aa).

The region spanning 1–119 is the MGS-like domain; sequence MKIALIAHDK…ESAKLIMADI (119 aa). Substrate-binding positions include histidine 8, lysine 12, 34–37, and 54–55; these read TGTT and SG. Aspartate 60 serves as the catalytic Proton donor/acceptor. Histidine 87 is a binding site for substrate.

Belongs to the methylglyoxal synthase family.

It catalyses the reaction dihydroxyacetone phosphate = methylglyoxal + phosphate. In terms of biological role, catalyzes the formation of methylglyoxal from dihydroxyacetone phosphate. The protein is Methylglyoxal synthase of Clostridium perfringens (strain 13 / Type A).